Here is a 91-residue protein sequence, read N- to C-terminus: Small ribosomal subunit protein bS16 (91 aa).

It belongs to the bacterial ribosomal protein bS16 family.

In Phytoplasma australiense, this protein is Small ribosomal subunit protein bS16.